A 102-amino-acid polypeptide reads, in one-letter code: NADH-quinone oxidoreductase subunit K 2 (102 aa).

The next 3 membrane-spanning stretches (helical) occupy residues Met1–Val21, Ile30–Gly50, and Leu65–Leu85.

This sequence belongs to the complex I subunit 4L family. In terms of assembly, NDH-1 is composed of 14 different subunits. Subunits NuoA, H, J, K, L, M, N constitute the membrane sector of the complex.

Its subcellular location is the cell inner membrane. The catalysed reaction is a quinone + NADH + 5 H(+)(in) = a quinol + NAD(+) + 4 H(+)(out). In terms of biological role, NDH-1 shuttles electrons from NADH, via FMN and iron-sulfur (Fe-S) centers, to quinones in the respiratory chain. The immediate electron acceptor for the enzyme in this species is believed to be ubiquinone. Couples the redox reaction to proton translocation (for every two electrons transferred, four hydrogen ions are translocated across the cytoplasmic membrane), and thus conserves the redox energy in a proton gradient. This chain is NADH-quinone oxidoreductase subunit K 2, found in Geotalea daltonii (strain DSM 22248 / JCM 15807 / FRC-32) (Geobacter daltonii).